The following is a 1288-amino-acid chain: VWFA and cache domain-containing protein 1 (1288 aa).

Positions 1 to 49 (MAREPEEEETVRPAAVVRRCPRCPGWPGAPRPPLWLLCLVACWILGAVA) are cleaved as a signal peptide. Residues 50 to 1109 (DADFSILDEA…ITLNMIKSAP (1060 aa)) lie on the Extracellular side of the membrane. Asparagine 159 carries an N-linked (GlcNAc...) asparagine glycan. A VWFA domain is found at 242–457 (HIVVILDHGA…TTVGRFYTNL (216 aa)). 2 Cache domains span residues 467–546 (FSLP…SEPP) and 786–867 (LTGP…HPTL). The helical transmembrane segment at 1110-1130 (VGPVAGGIMGCIMVLVLAVYA) threads the bilayer. Residues 1131–1288 (YRHQIHRRSH…VTVHTVDAEC (158 aa)) lie on the Cytoplasmic side of the membrane. Disordered regions lie at residues 1157–1176 (NLENDRDERDDDSHEDRGII) and 1187–1237 (ERHV…VDVG). Over residues 1159 to 1174 (ENDRDERDDDSHEDRG) the composition is skewed to basic and acidic residues. A compositionally biased stretch (polar residues) spans 1210-1229 (GYSTMSPQEDSENPPCNNDP).

It belongs to the calcium channel subunit alpha-2/delta family.

It localises to the membrane. In terms of biological role, may regulate voltage-dependent calcium channels. The protein is VWFA and cache domain-containing protein 1 (Cachd1) of Mus musculus (Mouse).